We begin with the raw amino-acid sequence, 516 residues long: 2-isopropylmalate synthase (516 aa).

The Pyruvate carboxyltransferase domain occupies valine 5 to tyrosine 267. 4 residues coordinate Mn(2+): aspartate 14, histidine 202, histidine 204, and asparagine 238. Positions tyrosine 392–tyrosine 516 are regulatory domain.

Belongs to the alpha-IPM synthase/homocitrate synthase family. LeuA type 1 subfamily. In terms of assembly, homodimer. Mn(2+) is required as a cofactor.

It is found in the cytoplasm. The enzyme catalyses 3-methyl-2-oxobutanoate + acetyl-CoA + H2O = (2S)-2-isopropylmalate + CoA + H(+). Its pathway is amino-acid biosynthesis; L-leucine biosynthesis; L-leucine from 3-methyl-2-oxobutanoate: step 1/4. Its function is as follows. Catalyzes the condensation of the acetyl group of acetyl-CoA with 3-methyl-2-oxobutanoate (2-ketoisovalerate) to form 3-carboxy-3-hydroxy-4-methylpentanoate (2-isopropylmalate). This chain is 2-isopropylmalate synthase, found in Buchnera aphidicola subsp. Diuraphis noxia.